A 300-amino-acid chain; its full sequence is DDRGK domain-containing protein 1 (300 aa).

Over 1-2 (MD) the chain is Lumenal. A helical membrane pass occupies residues 3–23 (VVLYIAAAAILLVLIVFSVKI). At 24 to 300 (RGRTQDADVE…NLTPDIHSSA (277 aa)) the chain is on the cytoplasmic side. Residues 28–173 (QDADVEDHQN…RVKEEQERRE (146 aa)) are disordered. Over residues 78–90 (NEDSPVEADEDEE) the composition is skewed to acidic residues. The segment covering 112 to 173 (KLEEKQARKA…RVKEEQERRE (62 aa)) has biased composition (basic and acidic residues). Residues 183-197 (SFIIEDQGEAEELTE) carry the UFM1-interacting motif (UFIM) motif. One can recognise a PCI domain in the interval 217–261 (VLLEDLASQFGLRTQDAIARLQDLIADGSLTGVIDDRGKFIFITP).

It belongs to the DDRGK1 family. As to quaternary structure, component of the UFM1 ribosome E3 ligase (UREL) complex, composed of ufl1, ddrgk1 and cdk5rap3.

Its subcellular location is the endoplasmic reticulum membrane. Component of the UFM1 ribosome E3 ligase (UREL) complex, a multiprotein complex that catalyzes ufmylation of endoplasmic reticulum-docked proteins. The UREL complex plays a key role in ribosome recycling by mediating mono-ufmylation of the RPL26/uL24 subunit of the 60S ribosome following ribosome dissociation: ufmylation weakens the junction between post-termination 60S subunits and SEC61 translocons, promoting release and recycling of the large ribosomal subunit from the endoplasmic reticulum membrane. Ufmylation of RPL26/uL24 and subsequent 60S ribosome recycling either take place after normal termination of translation or after ribosome stalling during cotranslational translocation at the endoplasmic reticulum. Within the UREL complex, DDRGK1 tethers the complex to the endoplasmic reticulum membrane to restrict its activity to endoplasmic reticulum-docked ribosomes and acts as an ufmylation 'reader': following RPL26/uL24 ufmylation, DDRGK1 specifically binds to ufmylated RPL26/uL24 via its UFIM motif, resulting in stable association between the 60S ribosome and the UREL complex, followed by dissociation of the 60S ribosome subunit from the endoplasmic reticulum membrane. The UREL complex is also involved in reticulophagy in response to endoplasmic reticulum stress by promoting ufmylation of proteins such as CYB5R3 and RPN1, thereby promoting lysosomal degradation of ufmylated proteins. Plays a role in cartilage development through sox9, inhibiting the ubiquitin-mediated proteasomal degradation of this transcriptional regulator. Required for stabilization and ufmylation of ATG9A. The sequence is that of DDRGK domain-containing protein 1 from Danio rerio (Zebrafish).